A 211-amino-acid polypeptide reads, in one-letter code: C-type lectin domain family 2 member L (211 aa).

Residues 1 to 53 (MEPAREPPARARPPPPAARPAPAAPRPRSPAEAEARGPEGLLRRSGSGYEGST) form a disordered region. Residues 10 to 28 (RARPPPPAARPAPAAPRPR) show a composition bias toward pro residues. Phosphoserine is present on S29. A helical transmembrane segment spans residues 66–86 (LLLGAIAVLLFAILVVMSILA). 3 cysteine pairs are disulfide-bonded: C97/C108, C125/C205, and C184/C197. The C-type lectin domain occupies 104–206 (YGRKCYYFSE…CLTTRPWVCS (103 aa)).

The protein resides in the membrane. The sequence is that of C-type lectin domain family 2 member L (Clec2l) from Rattus norvegicus (Rat).